We begin with the raw amino-acid sequence, 1018 residues long: MNKMPIPEIYVHNDIEENLNKLGWKELEGYEGEAFSNYIIKPILEEQLKIINDHIGEYKDEFIEKAINKLINEPKPEEILDYIKNGILITLDKGRKGQVSNRVKLIDYKNIEKNIFNYAHELKFKGNDNIIPDFTLFINGIPIIIIEAKREFSEKETYEEAINQINRYEREAPKLFNYVQFAIVYGDEKLYIPTYPNEEKEDRFKKPYKWKNEKKEEDIWDLLKRERVLDTIKNFIFFSKDRAGRKTKIIPRYMQYWAVKKAYERITNYLNNKDYKNRGLVWHWQGSGKTFEILYLAELFYNEFKNKDPIVFIMVDRRELETQFNDDIIALQNANFKDCFKKINSVEELKGVLEDIKESENNPNISEKGVYLVMMHKFDKNKLKDFIESFGSIDKKEILILRDEAHRTESGKFATLRNKILKNAIAIGFTGTPVHKKDMSTFKEYAYPQEGEFYLDRFFIEESIKEGFTLPLIWRVVKPEDIKDISEEEIKNIIEKLFVDEEDADKIVVSKKEIAEKIKLSDLLKSESSIKEASKYIAEHILEDTENFKFKAMVVAQDRKSCILFKKYLDEYLKEKIKNYNENWTQVVITYIHNDDVEIENYKKEIEKKYGKNVDELNKKWTEDFINKENPKILIVNKKLLTGFDAPILKTIYIHQFLKDYLLLQASARANRPAKNKKYGLIVDLTGILIENYKKAIENYNLYRDEAINKDILNNLFVETSKIWESFLTKLNEFKELFKLIVGIEFDDFIVNLKKQKNSKEFKKIISKIILSDKFDYFYAKLRELIQLFEAVGAYGEKLNYYETYEWLKIISAGINKQMRPKSYKIPYNQIKKEVIKYLEFDTYADIASTSINPQLLENLKNKDEINVIVADMIYYALDTLQNKKEPIYRMIYDRINELKNAYISKTKKNEYVINELINCLNALKTYEEEEKTLSKSEKAIKNMLFYLKNVENCNIKKLPLTEKTLKNLEDKKLIKPSDFDKIKKFLFVDLKNAIKETEKRRKVSNKIVEEIIKPIFI.

The protein belongs to the HsdR family. The type I restriction/modification system is composed of three polypeptides R, M and S.

It carries out the reaction Endonucleolytic cleavage of DNA to give random double-stranded fragments with terminal 5'-phosphates, ATP is simultaneously hydrolyzed.. In terms of biological role, the restriction (R) subunit of a type I restriction enzyme that recognizes 5'-GAYN(5)GTAA-3' and cleaves a random distance away. The R subunit is required for both endonuclease and ATPase activities but not for modification. After locating a non-methylated recognition site, the enzyme complex serves as a molecular motor that translocates DNA in an ATP-dependent manner until a collision occurs that triggers cleavage. The protein is Putative type I restriction enzyme MjaVIIIP endonuclease subunit of Methanocaldococcus jannaschii (strain ATCC 43067 / DSM 2661 / JAL-1 / JCM 10045 / NBRC 100440) (Methanococcus jannaschii).